An 84-amino-acid chain; its full sequence is Coiled-coil-helix-coiled-coil-helix domain-containing protein 7 (84 aa).

The region spanning 12-54 is the CHCH domain; that stretch reads SNPCLEETDASTKCMDENQYQKDLCTSYFIKYKNCRKFWNGIM. Short sequence motifs (cx9C motif) lie at residues 15–25 and 36–46; these read CLEETDASTKC and CTSYFIKYKNC. 2 cysteine pairs are disulfide-bonded: Cys-15–Cys-46 and Cys-25–Cys-36.

It belongs to the CHCHD7 family.

Its subcellular location is the mitochondrion intermembrane space. The sequence is that of Coiled-coil-helix-coiled-coil-helix domain-containing protein 7 (chchd7) from Xenopus laevis (African clawed frog).